A 225-amino-acid chain; its full sequence is Phosphoserine phosphatase (225 aa).

Met1 carries the N-acetylmethionine modification. The Nucleophile role is filled by Asp20. Residues Asp20 and Asp22 each coordinate Mg(2+). An L-serine-binding site is contributed by Asp20–Asp22. Asp22 acts as the Proton donor in catalysis. An O-phospho-L-serine-binding site is contributed by Met52. Residue Gly53 coordinates phosphate. L-serine-binding positions include Ser109 to Gly111 and Lys158. Residues Ser109 to Gly111 and Lys158 each bind O-phospho-L-serine. Residue Asp179 coordinates Mg(2+). An O-phospho-L-serine-binding site is contributed by Thr182. Thr182 provides a ligand contact to phosphate.

Belongs to the HAD-like hydrolase superfamily. SerB family. Homodimer. Requires Mg(2+) as cofactor.

Its subcellular location is the cytoplasm. It is found in the cytosol. It carries out the reaction O-phospho-L-serine + H2O = L-serine + phosphate. The catalysed reaction is O-phospho-D-serine + H2O = D-serine + phosphate. The protein operates within amino-acid biosynthesis; L-serine biosynthesis; L-serine from 3-phospho-D-glycerate: step 3/3. With respect to regulation, inhibited by calcium ions. Catalyzes the last irreversible step in the biosynthesis of L-serine from carbohydrates, the dephosphorylation of O-phospho-L-serine to L-serine. L-serine can then be used in protein synthesis, to produce other amino acids, in nucleotide metabolism or in glutathione synthesis, or can be racemized to D-serine, a neuromodulator. May also act on O-phospho-D-serine. The chain is Phosphoserine phosphatase from Homo sapiens (Human).